The sequence spans 437 residues: uncharacterized protein (437 aa).

Phosphoserine occurs at positions 290 and 293. Thr-296 is subject to Phosphothreonine. Ser-418 and Ser-428 each carry phosphoserine.

This is an uncharacterized protein from Schizosaccharomyces pombe (strain 972 / ATCC 24843) (Fission yeast).